A 496-amino-acid polypeptide reads, in one-letter code: Probable cytosol aminopeptidase (496 aa).

Mn(2+) contacts are provided by Lys261 and Asp266. Lys273 is a catalytic residue. Residues Asp284, Asp343, and Glu345 each contribute to the Mn(2+) site. Arg347 is a catalytic residue.

Belongs to the peptidase M17 family. It depends on Mn(2+) as a cofactor.

The protein localises to the cytoplasm. The catalysed reaction is Release of an N-terminal amino acid, Xaa-|-Yaa-, in which Xaa is preferably Leu, but may be other amino acids including Pro although not Arg or Lys, and Yaa may be Pro. Amino acid amides and methyl esters are also readily hydrolyzed, but rates on arylamides are exceedingly low.. The enzyme catalyses Release of an N-terminal amino acid, preferentially leucine, but not glutamic or aspartic acids.. Presumably involved in the processing and regular turnover of intracellular proteins. Catalyzes the removal of unsubstituted N-terminal amino acids from various peptides. The chain is Probable cytosol aminopeptidase from Bacillus pumilus (strain SAFR-032).